We begin with the raw amino-acid sequence, 170 residues long: Cysteine-rich venom protein VAR4 (170 aa).

The N-terminal stretch at 1–22 (MILLKLYLTLAAILCQSRGTTS) is a signal peptide. Residues 41–169 (NKHNDLRRTV…PLKYFLVCQY (129 aa)) form the SCP domain. 3 disulfides stabilise this stretch: C77-C156, C95-C170, and C151-C167.

The protein belongs to the CRISP family. Contains 8 disulfide bonds. In terms of tissue distribution, expressed by the venom gland.

The protein localises to the secreted. Its function is as follows. Blocks ryanodine receptors, and potassium channels. The chain is Cysteine-rich venom protein VAR4 from Varanus acanthurus (Ridge-tailed monitor).